We begin with the raw amino-acid sequence, 956 residues long: Endogenous retrovirus group K member 6 Pol protein (956 aa).

The 189-residue stretch at 57–245 (LEKGHIEPSF…TPFHYLGMQI (189 aa)) folds into the Reverse transcriptase domain. An LPQG motif is present at residues 161–164 (LPQG). The YXDD motif lies at 195–198 (CIDD). One can recognise an RNase H type-1 domain in the interval 460–590 (LENALTVFTD…ADLLVSSALI (131 aa)). D469, E497, D517, and D582 together coordinate Mg(2+). The Integrase-type zinc finger occupies 587–628 (SALIKAQELHALTHVNAAGLKNKFDVTWKQAKDIVQHCTQCQ). Residues H596, H600, C624, and C627 each coordinate Zn(2+). The 162-residue stretch at 642-803 (RGLCPNALWQ…TSAEQHLTGK (162 aa)) folds into the Integrase catalytic domain. The integrase-type DNA-binding region spans 811–859 (KLIWWKDNKNKTWEIGKVITWGRGFACVSPGENQLPVWIPTRHLKFYNE). The interval 865–890 (KKSTSAETETSQSSTVDSQDEQNGDV) is disordered. Residues 869-879 (SAETETSQSST) are compositionally biased toward low complexity.

The protein belongs to the beta type-B retroviral polymerase family. HERV class-II K(HML-2) pol subfamily. In terms of processing, cleavage sites that yield the mature proteins remain to be determined.

The enzyme catalyses DNA(n) + a 2'-deoxyribonucleoside 5'-triphosphate = DNA(n+1) + diphosphate. The catalysed reaction is Endonucleolytic cleavage to 5'-phosphomonoester.. Functionally, early post-infection, the reverse transcriptase converts the viral RNA genome into double-stranded viral DNA. The RNase H domain of the reverse transcriptase performs two functions. It degrades the RNA template and specifically removes the RNA primer from the RNA/DNA hybrid. Following nuclear import, the integrase catalyzes the insertion of the linear, double-stranded viral DNA into the host cell chromosome. Endogenous Pol proteins may have kept, lost or modified their original function during evolution. This is Endogenous retrovirus group K member 6 Pol protein (ERVK-6) from Homo sapiens (Human).